We begin with the raw amino-acid sequence, 126 residues long: 13 kDa ribonucleoprotein-associated protein (126 aa).

The protein belongs to the eukaryotic ribosomal protein eL8 family. In terms of assembly, component of the U3 snoRNP particle. Binds to the C'/D and B/C motifs in U3 snoRNA. Component of the 25S U4/U6.U5 tri-snRNP particle, a subcomplex of the spliceosome. Binds to the 5' stem-loop of U4 snRNA.

The protein localises to the nucleus. It is found in the nucleolus. Functionally, common component of the spliceosome and rRNA processing machinery. In association with the spliceosomal U4/U6.U5 tri-snRNP particle, required for splicing of pre-mRNA. In association with box C/D snoRNPs, required for processing of pre-ribosomal RNA (rRNA) and site-specific 2'-O-methylation of substrate RNAs. Essential for the accumulation and stability of U4 snRNA, U6 snRNA, and box C/D snoRNAs. The protein is 13 kDa ribonucleoprotein-associated protein (SNU13) of Yarrowia lipolytica (strain CLIB 122 / E 150) (Yeast).